The chain runs to 710 residues: Dendrin (710 aa).

Disordered stretches follow at residues 1–22, 62–195, 213–274, and 324–375; these read MLDG…DEES, WARG…PWGG, AGTA…KRLD, and GLNS…GKEG. Positions 103–134 form a coiled coil; sequence AEVRAREQEKRKAASQEREAKETERKRRKAGG. Over residues 105–127 the composition is skewed to basic and acidic residues; the sequence is VRAREQEKRKAASQEREAKETER. A nuclear localization region spans residues 113 to 131; it reads RKAASQEREAKETERKRRK. Residues 186 to 236 are interaction with MAGI2; the sequence is GVAWAGPWGGRRPGPPSYEAHLLLRGSAGTAPRRRWDRPPPYVAPPSYEGP. A compositionally biased stretch (basic and acidic residues) spans 265 to 274; that stretch reads EGGRTKKRLD. Residues 341-435 form an interaction with ACTN1 region; the sequence is PGTDAALSRS…LEVWKVTRRA (95 aa). Positions 360 to 370 are enriched in basic residues; it reads PRSRQHLRGSR. Ser-388 is modified (phosphoserine). Disordered stretches follow at residues 390–422, 469–508, and 521–710; these read KKPP…EGAE, PRTQ…ANPS, and NQPS…RERE. The interval 407-708 is interaction with CD2AP and NPHS1; sequence GGTGWKESLG…TRKTPQGNRE (302 aa). Residues 469–491 are compositionally biased toward polar residues; it reads PRTQQGQLVPSGESCSVSDSLSQ. Positions 693-710 are enriched in basic and acidic residues; that stretch reads GFIREDTRKTPQGNRERE.

As to quaternary structure, forms a ternary complex with MAGI2 and SH3KBP1; recruits DDN to the cytoplasm. Interacts with MAGI1. Interacts with ACTN1 and may interact with WWC1. Interacts with the podocyte slit diaphragm proteins CD2AP, NPHS1 and NPHS2; the interaction with CD2AP and NPHS1 is direct. As to expression, two forms of 81 kDa and 89 kDa are expressed in brain. The 81 kDa form is the only one found in kidney podocytes.

The protein localises to the cell projection. The protein resides in the dendritic spine membrane. Its subcellular location is the cytoplasm. It localises to the endoplasmic reticulum membrane. It is found in the perikaryon. The protein localises to the nucleus. Its function is as follows. Promotes apoptosis of kidney glomerular podocytes. Podocytes are highly specialized cells essential to the ultrafiltration of blood, resulting in the extraction of urine and the retention of protein. The protein is Dendrin (Ddn) of Mus musculus (Mouse).